The sequence spans 218 residues: ATP phosphoribosyltransferase (218 aa).

Belongs to the ATP phosphoribosyltransferase family. Short subfamily. Heteromultimer composed of HisG and HisZ subunits.

The protein localises to the cytoplasm. It carries out the reaction 1-(5-phospho-beta-D-ribosyl)-ATP + diphosphate = 5-phospho-alpha-D-ribose 1-diphosphate + ATP. It participates in amino-acid biosynthesis; L-histidine biosynthesis; L-histidine from 5-phospho-alpha-D-ribose 1-diphosphate: step 1/9. Catalyzes the condensation of ATP and 5-phosphoribose 1-diphosphate to form N'-(5'-phosphoribosyl)-ATP (PR-ATP). Has a crucial role in the pathway because the rate of histidine biosynthesis seems to be controlled primarily by regulation of HisG enzymatic activity. This Acaryochloris marina (strain MBIC 11017) protein is ATP phosphoribosyltransferase.